The primary structure comprises 508 residues: Pentatricopeptide repeat-containing protein At5g48730, chloroplastic (508 aa).

Positions M1–H10 are enriched in polar residues. The tract at residues M1–E22 is disordered. The transit peptide at M1–R28 directs the protein to the chloroplast. PPR repeat units follow at residues N149–V183, N184–S214, D220–P254, N255–P290, D291–P325, N326–W360, T361–P395, S396–L430, D431–P465, and D466–Q500.

It belongs to the PPR family. P subfamily.

It localises to the plastid. Its subcellular location is the chloroplast. This Arabidopsis thaliana (Mouse-ear cress) protein is Pentatricopeptide repeat-containing protein At5g48730, chloroplastic.